The chain runs to 577 residues: Origin recognition complex subunit 2 (577 aa).

Residues Met1–Arg100 form an Involved in LRWD1-binding repeat. Residues Ser81–Glu199 are disordered. Thr116 is modified (phosphothreonine). Phosphoserine is present on residues Ser122 and Ser138. Basic and acidic residues predominate over residues Ser143–Glu157. A compositionally biased stretch (acidic residues) spans Ser188–Glu199. Thr226 is subject to Phosphothreonine. Phosphoserine is present on residues Ser248 and Ser280.

The protein belongs to the ORC2 family. In terms of assembly, component of ORC, a complex composed of at least 6 subunits: ORC1, ORC2, ORC3, ORC4, ORC5 and ORC6. ORC is regulated in a cell-cycle dependent manner. It is sequentially assembled at the exit from anaphase of mitosis and disassembled as cells enter S phase. Interacts with DBF4. Interacts with MCM10. Interacts with LRWD1 throughout the cell cycle; this interaction, which occurs only with non-ubiquitinated form of LRWD1, prevents LRWD1 ubiquitination and hence stabilizes the protein. Interacts with POLQ.

Its subcellular location is the nucleus. Component of the origin recognition complex (ORC) that binds origins of replication. DNA-binding is ATP-dependent. The specific DNA sequences that define origins of replication have not been identified yet. ORC is required to assemble the pre-replication complex necessary to initiate DNA replication. Binds histone H3 and H4 trimethylation marks H3K9me3, H3K20me3 and H4K27me3. Stabilizes LRWD1, by protecting it from ubiquitin-mediated proteasomal degradation. Also stabilizes ORC3. The chain is Origin recognition complex subunit 2 (ORC2) from Homo sapiens (Human).